Consider the following 505-residue polypeptide: Glutamate--tRNA ligase (505 aa).

Positions 12–22 (PSPTGDPHVGT) match the 'HIGH' region motif. The 'KMSKS' region signature appears at 253–257 (KLSKR). Residue lysine 256 coordinates ATP.

This sequence belongs to the class-I aminoacyl-tRNA synthetase family. Glutamate--tRNA ligase type 1 subfamily. As to quaternary structure, monomer.

The protein resides in the cytoplasm. It catalyses the reaction tRNA(Glu) + L-glutamate + ATP = L-glutamyl-tRNA(Glu) + AMP + diphosphate. In terms of biological role, catalyzes the attachment of glutamate to tRNA(Glu) in a two-step reaction: glutamate is first activated by ATP to form Glu-AMP and then transferred to the acceptor end of tRNA(Glu). This is Glutamate--tRNA ligase from Chlamydia felis (strain Fe/C-56) (Chlamydophila felis).